Here is a 681-residue protein sequence, read N- to C-terminus: PTS system glucose-specific EIICBA component (681 aa).

Residues 3–414 enclose the PTS EIIC type-1 domain; it reads KKLFGQLQRI…LKYKTPGRED (412 aa). 10 consecutive transmembrane segments (helical) span residues 16-36, 73-93, 126-146, 170-190, 199-219, 273-293, 303-323, 328-348, 355-375, and 383-403; these read LMLP…GTAM, MIFA…AAIA, ILGI…GALA, FVPI…ALIW, AFST…FGFI, FMQG…LAIY, VVAG…ITEP, FLFV…LSFL, LHLG…GILP, and VIPV…FLIV. A PTS EIIB type-1 domain is found at 425 to 506; sequence TELPYAVLEA…QQIMNGQVVE (82 aa). Catalysis depends on Cys447, which acts as the Phosphocysteine intermediate; for EIIB activity. The PTS EIIA type-1 domain occupies 551-655; the sequence is DQVFSEKMMG…SDITPIIVTQ (105 aa). The active-site Tele-phosphohistidine intermediate; for EIIA activity is His603.

The protein resides in the cell membrane. It carries out the reaction N(pros)-phospho-L-histidyl-[protein] + D-glucose(out) = D-glucose 6-phosphate(in) + L-histidyl-[protein]. Its function is as follows. The phosphoenolpyruvate-dependent sugar phosphotransferase system (sugar PTS), a major carbohydrate active transport system, catalyzes the phosphorylation of incoming sugar substrates concomitantly with their translocation across the cell membrane. This system is involved in glucose transport. The protein is PTS system glucose-specific EIICBA component (ptsG) of Staphylococcus aureus (strain MRSA252).